Reading from the N-terminus, the 75-residue chain is UPF0235 protein Mflv_3569 (75 aa).

The protein belongs to the UPF0235 family.

The chain is UPF0235 protein Mflv_3569 from Mycolicibacterium gilvum (strain PYR-GCK) (Mycobacterium gilvum (strain PYR-GCK)).